The primary structure comprises 130 residues: Small ribosomal subunit protein uS8 (130 aa).

K88 bears the N6-succinyllysine mark.

It belongs to the universal ribosomal protein uS8 family. Component of the small ribosomal subunit. Part of the small subunit (SSU) processome, composed of more than 70 proteins and the RNA chaperone small nucleolar RNA (snoRNA) U3.

Its subcellular location is the cytoplasm. The protein resides in the nucleus. It is found in the nucleolus. In terms of biological role, component of the small ribosomal subunit. The ribosome is a large ribonucleoprotein complex responsible for the synthesis of proteins in the cell. Part of the small subunit (SSU) processome, first precursor of the small eukaryotic ribosomal subunit. During the assembly of the SSU processome in the nucleolus, many ribosome biogenesis factors, an RNA chaperone and ribosomal proteins associate with the nascent pre-rRNA and work in concert to generate RNA folding, modifications, rearrangements and cleavage as well as targeted degradation of pre-ribosomal RNA by the RNA exosome. Required for proper erythropoiesis. This is Small ribosomal subunit protein uS8 (Rps15a) from Mus musculus (Mouse).